Consider the following 185-residue polypeptide: Elongation factor P (185 aa).

The protein belongs to the elongation factor P family.

It is found in the cytoplasm. It functions in the pathway protein biosynthesis; polypeptide chain elongation. Functionally, involved in peptide bond synthesis. Stimulates efficient translation and peptide-bond synthesis on native or reconstituted 70S ribosomes in vitro. Probably functions indirectly by altering the affinity of the ribosome for aminoacyl-tRNA, thus increasing their reactivity as acceptors for peptidyl transferase. This chain is Elongation factor P, found in Mesoplasma florum (strain ATCC 33453 / NBRC 100688 / NCTC 11704 / L1) (Acholeplasma florum).